Reading from the N-terminus, the 584-residue chain is MWGVSSLDYDDDEELTRLLAVWDDEPLSLFLMNTFLLHQEGFRNLPFTVLRLSYAYRIFAKMLRAHGTPVAEDFMTRVAALARDEGLRDILGQRHAAEASRAEIAEALERVAERCDDRHGGSDDYVWLSRLLDLAPNYRQVELFQLLEKESRGQSRNSVWHLLRMDTVSATKFYEAFVSGCLPGAAAADGSGGGGSHYTGSRAGVSPGIQFGIKHEGLVKTLVECYVMHGREPVRDGLGLLIDPTSGLLGASMDLCFGVLKQGSGRTLLVEPCARVYEIKCRYKYLRKKEDPFVQNVLRRHDAAAVASLLQSHPVPGVEFRGERETPSAREFLLSHDAALFRATLKRARPLKPPEPLREYLADLLYLNKAECSEVIVFDAKHLSDDNSDGDATITINASLGLAAGDAAGGGADHHLRGSPGDSPPPIPFEDENTPELLGRLNVYEVARFSLPAFVNPRHQYYFQMLIQQYVLSQYYIKKHPDPERIDFRDLPTVYLVSAIFREREESELGCELLAGGRVFHCDHIPLLLIVTPVVFDPQFTRHAVSTVLDRWSRDLSRKTNLPIWVPNSANEYVVSSVPRPVSP.

Residues 409-430 (GGGADHHLRGSPGDSPPPIPFE) form a disordered region.

This sequence belongs to the herpesviridae alkaline nuclease family. As to quaternary structure, interacts with major DNA-binding protein; this interaction increases the nuclease processivity of the alkaline exonuclease.

The protein localises to the host nucleus. The protein resides in the host cytoplasm. Its function is as follows. Plays a role in processing non linear or branched viral DNA intermediates in order to promote the production of mature packaged unit-length linear progeny viral DNA molecules. Exhibits endonuclease and exonuclease activities and accepts both double-stranded and single-stranded DNA as substrate. Exonuclease digestion of DNA is in the 5'-&gt; 3' direction and the products are 5'-monophosphate nucleosides. Additionally, forms a recombinase with the major DNA-binding protein, which displays strand exchange activity. In Human cytomegalovirus (strain AD169) (HHV-5), this protein is Alkaline nuclease (UL98).